The chain runs to 291 residues: Phosphatidylserine decarboxylase proenzyme 2 (291 aa).

Active-site charge relay system; for autoendoproteolytic cleavage activity residues include aspartate 112 and serine 251. Serine 251 functions as the Schiff-base intermediate with substrate; via pyruvic acid; for decarboxylase activity in the catalytic mechanism. Pyruvic acid (Ser); by autocatalysis is present on serine 251.

Belongs to the phosphatidylserine decarboxylase family. PSD-B subfamily. Prokaryotic type II sub-subfamily. In terms of assembly, heterodimer of a large membrane-associated beta subunit and a small pyruvoyl-containing alpha subunit. Pyruvate is required as a cofactor. Post-translationally, is synthesized initially as an inactive proenzyme. Formation of the active enzyme involves a self-maturation process in which the active site pyruvoyl group is generated from an internal serine residue via an autocatalytic post-translational modification. Two non-identical subunits are generated from the proenzyme in this reaction, and the pyruvate is formed at the N-terminus of the alpha chain, which is derived from the carboxyl end of the proenzyme. The autoendoproteolytic cleavage occurs by a canonical serine protease mechanism, in which the side chain hydroxyl group of the serine supplies its oxygen atom to form the C-terminus of the beta chain, while the remainder of the serine residue undergoes an oxidative deamination to produce ammonia and the pyruvoyl prosthetic group on the alpha chain. During this reaction, the Ser that is part of the protease active site of the proenzyme becomes the pyruvoyl prosthetic group, which constitutes an essential element of the active site of the mature decarboxylase.

It localises to the cell membrane. It catalyses the reaction a 1,2-diacyl-sn-glycero-3-phospho-L-serine + H(+) = a 1,2-diacyl-sn-glycero-3-phosphoethanolamine + CO2. Its pathway is phospholipid metabolism; phosphatidylethanolamine biosynthesis; phosphatidylethanolamine from CDP-diacylglycerol: step 2/2. Functionally, catalyzes the formation of phosphatidylethanolamine (PtdEtn) from phosphatidylserine (PtdSer). The chain is Phosphatidylserine decarboxylase proenzyme 2 from Clostridium acetobutylicum (strain ATCC 824 / DSM 792 / JCM 1419 / IAM 19013 / LMG 5710 / NBRC 13948 / NRRL B-527 / VKM B-1787 / 2291 / W).